A 451-amino-acid chain; its full sequence is Tapasin-related protein (451 aa).

The first 20 residues, 1-20 (MGLEPSWYLLLCLAVSGAAG), serve as a signal peptide directing secretion. The Lumenal segment spans residues 21 to 412 (TDPPTAPTTA…RVLPNPEQRG (392 aa)). The Ig-like V-type domain occupies 196–301 (FQVTSETQTL…TSLYQAQQIM (106 aa)). Intrachain disulfides connect Cys217-Cys288 and Cys326-Cys387. N-linked (GlcNAc...) asparagine glycosylation is found at Asn270 and Asn277. The Ig-like C1-type domain occupies 302-399 (PLNILAPPKI…AHVSLEEPLT (98 aa)). A helical transmembrane segment spans residues 413–433 (TLGVIFASIIFLSALLLFLGL). Over 434-451 (HRQQASSSRSTRPMRHSG) the chain is Cytoplasmic.

Interacts with peptide-free HLA-A*02-B2M complexes or those loaded with low affinity peptides, likely facilitating peptide exchange onto higher affinity peptides. Interacts with MR1 in a ligand-independent way; this interaction may stabilize MR1 pool and facilitate ligand loading and dissociation. Widely expressed.

The protein resides in the cell membrane. Its subcellular location is the endoplasmic reticulum membrane. The protein localises to the microsome membrane. It localises to the golgi apparatus membrane. In terms of biological role, component of the antigen processing and presentation pathway, which binds to MHC class I coupled with beta2-microglobulin/B2M. Association between TAPBPR and MHC class I occurs in the absence of a functional peptide-loading complex (PLC). Expression seems to slow down and down-regulate MHC class I surface expression. This chain is Tapasin-related protein (Tapbpl), found in Mus musculus (Mouse).